The chain runs to 422 residues: UDP-N-acetylglucosamine 1-carboxyvinyltransferase (422 aa).

Residue lysine 22–asparagine 23 coordinates phosphoenolpyruvate. Residue arginine 93 participates in UDP-N-acetyl-alpha-D-glucosamine binding. Catalysis depends on cysteine 117, which acts as the Proton donor. The residue at position 117 (cysteine 117) is a 2-(S-cysteinyl)pyruvic acid O-phosphothioketal. UDP-N-acetyl-alpha-D-glucosamine is bound by residues arginine 122 to leucine 126, aspartate 308, and leucine 330.

It belongs to the EPSP synthase family. MurA subfamily.

The protein resides in the cytoplasm. The enzyme catalyses phosphoenolpyruvate + UDP-N-acetyl-alpha-D-glucosamine = UDP-N-acetyl-3-O-(1-carboxyvinyl)-alpha-D-glucosamine + phosphate. The protein operates within cell wall biogenesis; peptidoglycan biosynthesis. In terms of biological role, cell wall formation. Adds enolpyruvyl to UDP-N-acetylglucosamine. The chain is UDP-N-acetylglucosamine 1-carboxyvinyltransferase from Helicobacter pylori (strain Shi470).